The chain runs to 335 residues: UPF0284 protein TON_0688 (335 aa).

It belongs to the UPF0284 family.

This is UPF0284 protein TON_0688 from Thermococcus onnurineus (strain NA1).